Consider the following 291-residue polypeptide: tRNA dimethylallyltransferase (291 aa).

9-16 (GPTASGKT) provides a ligand contact to ATP. 11 to 16 (TASGKT) is a substrate binding site. The segment at 34-37 (DSLQ) is interaction with substrate tRNA.

It belongs to the IPP transferase family. As to quaternary structure, monomer. It depends on Mg(2+) as a cofactor.

It catalyses the reaction adenosine(37) in tRNA + dimethylallyl diphosphate = N(6)-dimethylallyladenosine(37) in tRNA + diphosphate. Catalyzes the transfer of a dimethylallyl group onto the adenine at position 37 in tRNAs that read codons beginning with uridine, leading to the formation of N6-(dimethylallyl)adenosine (i(6)A). The sequence is that of tRNA dimethylallyltransferase from Onion yellows phytoplasma (strain OY-M).